The chain runs to 400 residues: Phosphoglycerate kinase (400 aa).

Residues 22–24, Arg38, 61–64, Arg119, and Arg152 each bind substrate; these read DFN and HLGR. ATP is bound by residues Lys205, Gly296, Glu327, and 353-356; that span reads GGDT.

This sequence belongs to the phosphoglycerate kinase family. Monomer.

It is found in the cytoplasm. The catalysed reaction is (2R)-3-phosphoglycerate + ATP = (2R)-3-phospho-glyceroyl phosphate + ADP. It functions in the pathway carbohydrate degradation; glycolysis; pyruvate from D-glyceraldehyde 3-phosphate: step 2/5. The protein is Phosphoglycerate kinase of Campylobacter jejuni subsp. jejuni serotype O:23/36 (strain 81-176).